Here is a 158-residue protein sequence, read N- to C-terminus: F(420)H(2) dehydrogenase subunit C (158 aa).

Belongs to the complex I 30 kDa subunit family. The FPO complex is composed of at least 13 different subunits.

The protein resides in the cell membrane. It carries out the reaction methanophenazine + reduced coenzyme F420-(gamma-L-Glu)(n) = dihydromethanophenazine + oxidized coenzyme F420-(gamma-L-Glu)(n) + H(+). In terms of biological role, component of the F(420)H(2) dehydrogenase (FPO complex) which is part of the energy-conserving F(420)H(2):heterodisulfide oxidoreductase system. The membrane-bound electron transfer system of the complex plays an important role in the metabolism of methylotrophic methanogens when the organisms grow on methanol or methylamines. Catalyzes the oxidation of methanophenazine to dihydromethanophenazine. It shuttles electrons from F(420)H(2), via FAD and iron-sulfur (Fe-S) centers, to methanophenazine (an electron carrier in the membrane). It couples the redox reaction to proton translocation (for every two electrons transferred, two hydrogen ions are translocated across the cytoplasmic membrane), and thus conserves the redox energy in a proton gradient. It also catalyzes the oxidation of F(420)H(2) with quinones such as 2,3-dimethyl-1,4-naphthoquinone, 2-methyl-1,4-naphthoquinone and tetramethyl-p-benzoquinone. The chain is F(420)H(2) dehydrogenase subunit C (fpoC) from Methanosarcina mazei (strain ATCC BAA-159 / DSM 3647 / Goe1 / Go1 / JCM 11833 / OCM 88) (Methanosarcina frisia).